A 147-amino-acid chain; its full sequence is Sentan (147 aa).

The disordered stretch occupies residues 14-34 (RLEGEPNPPAAPTSTLAPKNM). A compositionally biased stretch (polar residues) spans 25–34 (PTSTLAPKNM).

The protein belongs to the S-100 family.

Its subcellular location is the cell projection. The protein resides in the cilium. May be a component of the linker structure that bridges the ciliary membrane and peripheral singlet microtubules. This is Sentan (SNTN) from Bos taurus (Bovine).